The sequence spans 447 residues: MKLFGTSGIRMKNLDPLIAYKVGYAISKNFKKAVIGRDTRTTGNLIESAITAGLLNGGCDVTTIGMVPTPVLGYSAKDYDLGIMITASHNPPEYNGIKLFNKNGTAFDPKQEKELENIINNDDFNEGTWDNIGCVIEDKTAVKNYSEYILQNLDIKTNFNVVVDCANAAGCVVSPNIFTEAGCKVISVNSHCDGRFVGRMPEPNEKNLKETVDIIKGLNSNCRNYIGIAHDGDADRMIAIDELGRVTDFDKLLAAFCKYIVQKTGADKIVTTVDASMAIDEYLNEFGAEVVRTKIGDVAVAEELEKTGAIFGGEPSGTWIHRDIHLTPDGILSGLRVLEMMEFYDKKLHEIIDEVPSYYNMREKILCPDNLKQQVMDYVSKEGEKIFEKKPETLDGVRFSFEKGWILIRPSGTESYVRVRVEAKEKDFAEKLMKTGISMVYTGISGN.

Ser88 functions as the Phosphoserine intermediate in the catalytic mechanism. The Mg(2+) site is built by Ser88, Asp231, Asp233, and Asp235. Residue Ser88 is modified to Phosphoserine.

Belongs to the phosphohexose mutase family. Mg(2+) is required as a cofactor. Activated by phosphorylation.

It carries out the reaction alpha-D-glucosamine 1-phosphate = D-glucosamine 6-phosphate. Catalyzes the conversion of glucosamine-6-phosphate to glucosamine-1-phosphate. This Methanococcus maripaludis (strain C5 / ATCC BAA-1333) protein is Phosphoglucosamine mutase.